Reading from the N-terminus, the 485-residue chain is Amidophosphoribosyltransferase, chloroplastic (485 aa).

Residues 1–18 (KTTNTFASVNDDEKPREE) constitute a chloroplast transit peptide. The active-site Nucleophile is the Cys-19. Residues 19–237 (CGVVGIYGDP…PGEVVVVDHT (219 aa)) enclose the Glutamine amidotransferase type-2 domain. Cys-253 contacts [4Fe-4S] cluster. Mg(2+)-binding residues include Ser-300, Asp-362, and Asp-363. [4Fe-4S] cluster-binding residues include Cys-399, Cys-450, and Cys-453.

The protein in the C-terminal section; belongs to the purine/pyrimidine phosphoribosyltransferase family. It depends on Mg(2+) as a cofactor. [4Fe-4S] cluster is required as a cofactor.

Its subcellular location is the plastid. It is found in the chloroplast. The catalysed reaction is 5-phospho-beta-D-ribosylamine + L-glutamate + diphosphate = 5-phospho-alpha-D-ribose 1-diphosphate + L-glutamine + H2O. The protein operates within purine metabolism; IMP biosynthesis via de novo pathway; N(1)-(5-phospho-D-ribosyl)glycinamide from 5-phospho-alpha-D-ribose 1-diphosphate: step 1/2. The protein is Amidophosphoribosyltransferase, chloroplastic (PUR1) of Vigna aconitifolia (Moth bean).